The primary structure comprises 374 residues: Queuine tRNA-ribosyltransferase (374 aa).

Residue aspartate 94 is the Proton acceptor of the active site. Substrate-binding positions include 94-98 (DSGGF), aspartate 148, glutamine 191, and glycine 218. The segment at 249 to 255 (GVGSPDY) is RNA binding. Aspartate 268 serves as the catalytic Nucleophile. Residues 273-277 (TRIGR) are RNA binding; important for wobble base 34 recognition. 4 residues coordinate Zn(2+): cysteine 306, cysteine 308, cysteine 311, and histidine 337.

Belongs to the queuine tRNA-ribosyltransferase family. In terms of assembly, homodimer. Within each dimer, one monomer is responsible for RNA recognition and catalysis, while the other monomer binds to the replacement base PreQ1. Zn(2+) is required as a cofactor.

It carries out the reaction 7-aminomethyl-7-carbaguanine + guanosine(34) in tRNA = 7-aminomethyl-7-carbaguanosine(34) in tRNA + guanine. It participates in tRNA modification; tRNA-queuosine biosynthesis. Catalyzes the base-exchange of a guanine (G) residue with the queuine precursor 7-aminomethyl-7-deazaguanine (PreQ1) at position 34 (anticodon wobble position) in tRNAs with GU(N) anticodons (tRNA-Asp, -Asn, -His and -Tyr). Catalysis occurs through a double-displacement mechanism. The nucleophile active site attacks the C1' of nucleotide 34 to detach the guanine base from the RNA, forming a covalent enzyme-RNA intermediate. The proton acceptor active site deprotonates the incoming PreQ1, allowing a nucleophilic attack on the C1' of the ribose to form the product. After dissociation, two additional enzymatic reactions on the tRNA convert PreQ1 to queuine (Q), resulting in the hypermodified nucleoside queuosine (7-(((4,5-cis-dihydroxy-2-cyclopenten-1-yl)amino)methyl)-7-deazaguanosine). The protein is Queuine tRNA-ribosyltransferase of Acetivibrio thermocellus (strain ATCC 27405 / DSM 1237 / JCM 9322 / NBRC 103400 / NCIMB 10682 / NRRL B-4536 / VPI 7372) (Clostridium thermocellum).